We begin with the raw amino-acid sequence, 503 residues long: Probable cytosol aminopeptidase (503 aa).

Residues Lys270 and Asp275 each coordinate Mn(2+). The active site involves Lys282. Residues Asp293, Asp352, and Glu354 each contribute to the Mn(2+) site. Residue Arg356 is part of the active site.

The protein belongs to the peptidase M17 family. Mn(2+) serves as cofactor.

Its subcellular location is the cytoplasm. The enzyme catalyses Release of an N-terminal amino acid, Xaa-|-Yaa-, in which Xaa is preferably Leu, but may be other amino acids including Pro although not Arg or Lys, and Yaa may be Pro. Amino acid amides and methyl esters are also readily hydrolyzed, but rates on arylamides are exceedingly low.. It carries out the reaction Release of an N-terminal amino acid, preferentially leucine, but not glutamic or aspartic acids.. Presumably involved in the processing and regular turnover of intracellular proteins. Catalyzes the removal of unsubstituted N-terminal amino acids from various peptides. This Enterobacter sp. (strain 638) protein is Probable cytosol aminopeptidase.